The following is a 1191-amino-acid chain: Rho GTPase-activating protein 20 (1191 aa).

Over residues 1-23 (MEAMSPQQETLGGQPGRSSSLTG) the composition is skewed to polar residues. The interval 1 to 45 (MEAMSPQQETLGGQPGRSSSLTGVSRLAGGSCTKKKMKTLAERRR) is disordered. Serine 46 carries the post-translational modification Phosphoserine. In terms of domain architecture, PH spans 78-180 (SLVCSNRTLL…EQKDKWLSLL (103 aa)). Residues 194–295 (KSIPLKIFAK…TPFNLQEPFL (102 aa)) enclose the Ras-associating domain. The Rho-GAP domain occupies 365-551 (ISLPNICEND…FLIENCLRIF (187 aa)). 2 positions are modified to phosphoserine: serine 704 and serine 730. Disordered regions lie at residues 768 to 791 (SKKN…NHVK), 926 to 1014 (RLNL…SRPA), 1052 to 1123 (KKAK…RHCS), and 1140 to 1191 (HEEI…TKDI). A compositionally biased stretch (low complexity) spans 934–961 (SYSSLSSPGTSPSGSSVSSQDSAFSQIS). Composition is skewed to polar residues over residues 962-981 (EHSV…TFQA) and 1103-1116 (PVQS…SPFQ). The span at 1182–1191 (IEDRYLTKDI) shows a compositional bias: basic and acidic residues.

As to expression, expressed predominantly in the brain. Lower expression is found in lymph nodes.

In terms of biological role, GTPase activator for the Rho-type GTPases by converting them to an inactive GDP-bound state. This Homo sapiens (Human) protein is Rho GTPase-activating protein 20 (ARHGAP20).